The following is a 1402-amino-acid chain: Defective in tip formation protein A (1402 aa).

4 disordered regions span residues 1 to 20 (MKDI…PPQI), 37 to 94 (NVTT…PQIV), 109 to 133 (NTPS…DNDI), and 210 to 292 (KQSS…RRLK). 2 repeat units span residues 12–18 (TTTVAPP) and 40–46 (TTTVQPP). Positions 12-92 (TTTVAPPQIN…TTTTTVQPPQ (81 aa)) are 4 X 7 AA repeat of T-T-T-[IV]-[AQ]-P-P. Residues 38–47 (VTTTTVQPPQ) are compositionally biased toward low complexity. The segment covering 48–58 (IVSPPSPPSPP) has biased composition (pro residues). Residues 59–94 (QTTTIAPPTILPTTKTTTTTTTTTTTTTTVQPPQIV) show a composition bias toward low complexity. Tandem repeats lie at residues 60–66 (TTTIAPP) and 86–92 (TTVQPPQ). Positions 210 to 234 (KQSSQSQLQQQLSSQSLQQIQQKSK) are enriched in low complexity. Pro residues predominate over residues 235 to 253 (QPPPQQQQQQQPPPPPIPL). Residues 254–279 (LPQIHQQLKPKQQQEQQQQQEQQQQQ) show a composition bias toward low complexity. A coiled-coil region spans residues 350 to 383 (QRIKSFIENHKKKKQKYREYQSEKNQQQKSNSKK). Disordered regions lie at residues 429 to 453 (DQQQ…SPMT) and 712 to 745 (NNNN…NLSN). Low complexity predominate over residues 430–453 (QQQQQQQQQQSTMTTTSSSSSPMT).

The protein resides in the cell surface. Required for correct organization of the actin cytoskeleton and cytokinesis. Also required for apical sorting of prestalk cells, a prerequisite for formation of the tip at the mound stage and subsequent formation of the fruiting body. May be required for cell adhesion. The protein is Defective in tip formation protein A (dtfA) of Dictyostelium discoideum (Social amoeba).